The sequence spans 456 residues: UDP-N-acetylmuramoylalanine--D-glutamate ligase (456 aa).

113-119 (GTNGKTT) provides a ligand contact to ATP.

The protein belongs to the MurCDEF family.

Its subcellular location is the cytoplasm. It catalyses the reaction UDP-N-acetyl-alpha-D-muramoyl-L-alanine + D-glutamate + ATP = UDP-N-acetyl-alpha-D-muramoyl-L-alanyl-D-glutamate + ADP + phosphate + H(+). The protein operates within cell wall biogenesis; peptidoglycan biosynthesis. Cell wall formation. Catalyzes the addition of glutamate to the nucleotide precursor UDP-N-acetylmuramoyl-L-alanine (UMA). This Crocosphaera subtropica (strain ATCC 51142 / BH68) (Cyanothece sp. (strain ATCC 51142)) protein is UDP-N-acetylmuramoylalanine--D-glutamate ligase.